A 293-amino-acid polypeptide reads, in one-letter code: Homeobox protein ceh-24 (293 aa).

2 stretches are compositionally biased toward basic and acidic residues: residues 1 to 15 (MSEK…KKDE) and 22 to 38 (QETK…MKIK). Disordered regions lie at residues 1 to 38 (MSEK…MKIK) and 203 to 256 (EKEK…SNGV). Positions 144–203 (RRKRRVLFSQAQVYELERRFKQAKYLTAPEREQLANSIRLTPTQVKIWFQNHRYKCKRQE) form a DNA-binding region, homeobox.

Belongs to the NK-2 homeobox family. As to expression, expressed in the 8 vulval muscles, 8-10 ventral neurons in the head and in the most posterior pharyngeal muscle cell, m8.

It is found in the nucleus. Its function is as follows. Probable transcriptional regulator that is required in neural development for the normal formation of sublateral cholinergic motor neuron processes. Plays a role in regulating the expression of acetylcholine transporter protein unc-17 in the sublateral processes. In particular, it is required in sublateral motor neurons for a left-right turning behavior that occurs during the lethargus phase of the normal sleep process called 'flipping'. During 'flipping' animals rotate 180 degrees about their longitudinal axis. The polypeptide is Homeobox protein ceh-24 (Caenorhabditis briggsae).